Reading from the N-terminus, the 1482-residue chain is Chromosome partition protein MukB (1482 aa).

34-41 contacts ATP; that stretch reads GGNGAGKS. Coiled-coil stretches lie at residues 326–472, 507–602, 780–805, 832–1110, and 1209–1265; these read LEAD…QTAH, NQRH…RRAP, RAAR…ATLS, DDPE…REQV, and VEAI…LQSV. Positions 666-783 are flexible hinge; sequence PGGSEDPRLN…SLPLFGRAAR (118 aa).

The protein belongs to the SMC family. MukB subfamily. In terms of assembly, homodimerization via its hinge domain. Binds to DNA via its C-terminal region. Interacts, and probably forms a ternary complex, with MukE and MukF via its C-terminal region. The complex formation is stimulated by calcium or magnesium. Interacts with tubulin-related protein FtsZ.

It is found in the cytoplasm. It localises to the nucleoid. Functionally, plays a central role in chromosome condensation, segregation and cell cycle progression. Functions as a homodimer, which is essential for chromosome partition. Involved in negative DNA supercoiling in vivo, and by this means organize and compact chromosomes. May achieve or facilitate chromosome segregation by condensation DNA from both sides of a centrally located replisome during cell division. In Klebsiella pneumoniae subsp. pneumoniae (strain ATCC 700721 / MGH 78578), this protein is Chromosome partition protein MukB.